The chain runs to 127 residues: Protein chibby homolog 1 (127 aa).

A disordered region spans residues 1–25; sequence MPLFGSIFSPKKTPPRKSASLSNLH. Phosphoserine occurs at positions 9 and 20. The tract at residues 60 to 112 is minimal region for the interaction with PKD2; the sequence is VADSVISGGVDRRETQRLRKRNQQLEEENNLLRLKVDILLDMLSETTAESHLK. Residues 68–110 adopt a coiled-coil conformation; it reads GVDRRETQRLRKRNQQLEEENNLLRLKVDILLDMLSETTAESH. The leucine-zipper; mediates homodimerization stretch occupies residues 77–98; the sequence is LRKRNQQLEEENNLLRLKVDIL.

It belongs to the chibby family. As to quaternary structure, homodimer. Homodimerization is essential for nuclear localization and interaction with KPNA4 but is dispensable for interaction with CTNNB1. Interacts with polycystin-2/PKD2 and GM130. Interacts with the C-terminal region of CTNNB1. Interacts (C-terminus) with TCIM (C-terminus), TCIM competes with CTNNB1 for the interaction with CBY1. Interacts with FAM92A; this interaction facilitates targeting of FAM92A to cilium basal body. Interacts with CIBAR2. Interacts with KPNA4. In terms of tissue distribution, found in heart, brain, lung, liver, muscle, kidney and testis. Levels are approximately 3-fold higher in embryonic and adult heart than in lung or liver.

It is found in the nucleus speckle. The protein resides in the cytoplasm. Its subcellular location is the cytoskeleton. It localises to the cilium basal body. The protein localises to the microtubule organizing center. It is found in the centrosome. The protein resides in the centriole. Its subcellular location is the golgi apparatus. It localises to the trans-Golgi network. The protein localises to the cell projection. It is found in the cilium. The protein resides in the flagellum. Its subcellular location is the nucleus. Functionally, inhibits the Wnt/Wingless pathway by binding to CTNNB1/beta-catenin and inhibiting beta-catenin-mediated transcriptional activation through competition with TCF/LEF transcription factors. Has also been shown to play a role in regulating the intracellular trafficking of polycystin-2/PKD2 and possibly of other intracellular proteins. Promotes adipocyte and cardiomyocyte differentiation. The chain is Protein chibby homolog 1 (Cby1) from Mus musculus (Mouse).